Consider the following 714-residue polypeptide: Fatty acid oxidation complex subunit alpha (714 aa).

The segment at Met1–Pro190 is enoyl-CoA hydratase. Residues Ala306 to Gln714 form a 3-hydroxyacyl-CoA dehydrogenase region.

This sequence in the N-terminal section; belongs to the enoyl-CoA hydratase/isomerase family. It in the central section; belongs to the 3-hydroxyacyl-CoA dehydrogenase family. As to quaternary structure, heterotetramer of two alpha chains (FadJ) and two beta chains (FadI).

It localises to the cytoplasm. The catalysed reaction is a (3S)-3-hydroxyacyl-CoA = a (2E)-enoyl-CoA + H2O. It catalyses the reaction a 4-saturated-(3S)-3-hydroxyacyl-CoA = a (3E)-enoyl-CoA + H2O. The enzyme catalyses a (3S)-3-hydroxyacyl-CoA + NAD(+) = a 3-oxoacyl-CoA + NADH + H(+). It carries out the reaction (3S)-3-hydroxybutanoyl-CoA = (3R)-3-hydroxybutanoyl-CoA. It participates in lipid metabolism; fatty acid beta-oxidation. Its function is as follows. Catalyzes the formation of a hydroxyacyl-CoA by addition of water on enoyl-CoA. Also exhibits 3-hydroxyacyl-CoA epimerase and 3-hydroxyacyl-CoA dehydrogenase activities. The polypeptide is Fatty acid oxidation complex subunit alpha (Shigella boydii serotype 4 (strain Sb227)).